Consider the following 100-residue polypeptide: Small ribosomal subunit protein uS14c (100 aa).

Belongs to the universal ribosomal protein uS14 family. Part of the 30S ribosomal subunit.

Its subcellular location is the plastid. Functionally, binds 16S rRNA, required for the assembly of 30S particles. This is Small ribosomal subunit protein uS14c (rps14) from Cuscuta gronovii (Common dodder).